Here is a 78-residue protein sequence, read N- to C-terminus: DNA gyrase inhibitor YacG (78 aa).

4 residues coordinate Zn(2+): Cys7, Cys10, Cys26, and Cys30.

This sequence belongs to the DNA gyrase inhibitor YacG family. In terms of assembly, interacts with GyrB. Zn(2+) is required as a cofactor.

Functionally, inhibits all the catalytic activities of DNA gyrase by preventing its interaction with DNA. Acts by binding directly to the C-terminal domain of GyrB, which probably disrupts DNA binding by the gyrase. The protein is DNA gyrase inhibitor YacG of Colwellia psychrerythraea (strain 34H / ATCC BAA-681) (Vibrio psychroerythus).